Here is a 639-residue protein sequence, read N- to C-terminus: Bone morphogenetic protein 1 homolog (639 aa).

Positions Met1–Gly23 are cleaved as a signal peptide. A propeptide spanning residues Glu24 to Arg109 is cleaved from the precursor. Residues Arg100 to Pro305 form the Peptidase M12A domain. Asn122 and Asn140 each carry an N-linked (GlcNAc...) asparagine glycan. 6 cysteine pairs are disulfide-bonded: Cys143–Cys304, Cys167–Cys189, Cys169–Cys170, Cys307–Cys333, Cys360–Cys382, and Cys420–Cys446. His197 contributes to the Zn(2+) binding site. Glu198 is an active-site residue. Zn(2+)-binding residues include His201 and His207. 2 CUB domains span residues Cys307–Ile419 and Cys420–Lys531. Residue Asn317 is glycosylated (N-linked (GlcNAc...) asparagine). Asn455 carries N-linked (GlcNAc...) asparagine glycosylation. 4 disulfide bridges follow: Cys473/Cys495, Cys536/Cys548, Cys544/Cys557, and Cys559/Cys572. Residues Glu532–Glu573 enclose the EGF-like; calcium-binding domain.

The cofactor is Zn(2+). Ectodermal and primary mesenchyme cells in hatched blastula.

In Strongylocentrotus purpuratus (Purple sea urchin), this protein is Bone morphogenetic protein 1 homolog.